Reading from the N-terminus, the 477-residue chain is Phosphatidylinositol 4-kinase type 2-beta (477 aa).

The interval 1–80 is disordered; that stretch reads MPEPPRDIMA…EDRSISASLS (80 aa). Ser45 bears the Phosphoserine mark. The PI3K/PI4K catalytic domain occupies 116–447; sequence GVFPERISQG…AQMPCVIVEC (332 aa). The interval 122–128 is G-loop; it reads ISQGSSG. ATP is bound by residues Ser129 and Lys144. Residues 149 to 151 form an important for substrate binding region; that stretch reads EPY. The interval 157–170 is important for interaction with membranes; that stretch reads KWTKYVHKVCCPCC. Residues 253–256 and 267–268 each bind ATP; these read QLFV and RR. Positions 260–268 are important for interaction with membranes; it reads KEAEYWLRR. Positions 297-305 are catalytic loop; that stretch reads RNTDRGNDN. An activation loop region spans residues 338–358; that stretch reads AIDNGLAFPFKHPDEWRAYPF. Position 340 (Asp340) interacts with ATP. The important for interaction with membranes stretch occupies residues 353-362; that stretch reads WRAYPFHWAW.

This sequence belongs to the PI3/PI4-kinase family. Type II PI4K subfamily.

It is found in the cytoplasm. The protein resides in the cytosol. The protein localises to the golgi apparatus membrane. It localises to the endoplasmic reticulum membrane. Its subcellular location is the cell membrane. It is found in the early endosome membrane. The catalysed reaction is a 1,2-diacyl-sn-glycero-3-phospho-(1D-myo-inositol) + ATP = a 1,2-diacyl-sn-glycero-3-phospho-(1D-myo-inositol 4-phosphate) + ADP + H(+). Together with PI4K2A and the type III PI4Ks (PIK4CA and PIK4CB) it contributes to the overall PI4-kinase activity of the cell. This contribution may be especially significant in plasma membrane, endosomal and Golgi compartments. The phosphorylation of phosphatidylinositol (PI) to PI4P is the first committed step in the generation of phosphatidylinositol 4,5-bisphosphate (PIP2), a precursor of the second messenger inositol 1,4,5-trisphosphate (InsP3). Contributes to the production of InsP3 in stimulated cells and is likely to be involved in the regulation of vesicular trafficking. The polypeptide is Phosphatidylinositol 4-kinase type 2-beta (Pi4k2b) (Rattus norvegicus (Rat)).